The following is a 316-amino-acid chain: Ribonuclease Z (316 aa).

Positions 63, 65, 67, 68, 143, 213, and 271 each coordinate Zn(2+). Asp67 serves as the catalytic Proton acceptor.

It belongs to the RNase Z family. In terms of assembly, homodimer. It depends on Zn(2+) as a cofactor.

The catalysed reaction is Endonucleolytic cleavage of RNA, removing extra 3' nucleotides from tRNA precursor, generating 3' termini of tRNAs. A 3'-hydroxy group is left at the tRNA terminus and a 5'-phosphoryl group is left at the trailer molecule.. In terms of biological role, zinc phosphodiesterase, which displays some tRNA 3'-processing endonuclease activity. Probably involved in tRNA maturation, by removing a 3'-trailer from precursor tRNA. This chain is Ribonuclease Z, found in Bacteroides thetaiotaomicron (strain ATCC 29148 / DSM 2079 / JCM 5827 / CCUG 10774 / NCTC 10582 / VPI-5482 / E50).